We begin with the raw amino-acid sequence, 470 residues long: Argininosuccinate lyase (470 aa).

The protein belongs to the lyase 1 family. Argininosuccinate lyase subfamily.

The protein localises to the cytoplasm. It carries out the reaction 2-(N(omega)-L-arginino)succinate = fumarate + L-arginine. It functions in the pathway amino-acid biosynthesis; L-arginine biosynthesis; L-arginine from L-ornithine and carbamoyl phosphate: step 3/3. The sequence is that of Argininosuccinate lyase from Mycobacterium sp. (strain JLS).